We begin with the raw amino-acid sequence, 96 residues long: Class I hydrophobin 3 (96 aa).

The signal sequence occupies residues 1 to 18 (MQFAKIASVLAMAAAAVA). 4 cysteine pairs are disulfide-bonded: Cys-43/Cys-72, Cys-51/Cys-66, Cys-52/Cys-57, and Cys-73/Cys-92.

It belongs to the fungal hydrophobin family.

It localises to the secreted. The protein localises to the cell wall. Aerial growth, conidiation, and dispersal of filamentous fungi in the environment rely upon a capability of their secreting small amphipathic proteins called hydrophobins (HPBs) with low sequence identity. Class I can self-assemble into an outermost layer of rodlet bundles on aerial cell surfaces, conferring cellular hydrophobicity that supports fungal growth, development and dispersal; whereas Class II form highly ordered films at water-air interfaces through intermolecular interactions but contribute nothing to the rodlet structure. Does not seem to be important for the ability to cause seedling disease. This Gibberella moniliformis (Maize ear and stalk rot fungus) protein is Class I hydrophobin 3.